Here is a 252-residue protein sequence, read N- to C-terminus: MKVDLNCDLGEAFGNYSFGGDNQIIPLITSANIACGFHAGDQHVMNDTIKLAKDNGIGIGAHPGLPDLQGFGRRNMDLSPEEVYDIVVYQLGALNGFCRIHDVKINHVKPHGALYQMGARDKVIAHAIAKAVYDFDPTLIYVGLSNTLLISEAQALGLSTASEVFADRRYEDDGQLVSRKEADALITNTDEAIKQVINMVKFQKVITKNNNTIDIKADTICVHGDGAHAIEFVTQIREQLTKEGISITRLGG.

It belongs to the LamB/PxpA family. Forms a complex composed of PxpA, PxpB and PxpC.

It catalyses the reaction 5-oxo-L-proline + ATP + 2 H2O = L-glutamate + ADP + phosphate + H(+). Its function is as follows. Catalyzes the cleavage of 5-oxoproline to form L-glutamate coupled to the hydrolysis of ATP to ADP and inorganic phosphate. The sequence is that of 5-oxoprolinase subunit A from Staphylococcus saprophyticus subsp. saprophyticus (strain ATCC 15305 / DSM 20229 / NCIMB 8711 / NCTC 7292 / S-41).